Consider the following 196-residue polypeptide: MDVTIQHPWFKHALGPFYPSRLFDQFFGQGLFEYDLLPFLSSTISPYYRQTLLRTVLDSCISELMTHRWFVPHQPHAGNPENNPIKVRSDRDKFVIFLDVKHFSPEDLTVKVLEDFVEIHGKHNERQDDHGYISREFHRRYRLPSSVDQSALSCSLSADGMLTFSGPKVQSGLDAGHSERAIPVSQEEKPSSAPLF.

Met1 bears the N-acetylmethionine mark. The interval 1-63 is required for complex formation with BFSP1 and BFSP2; that stretch reads MDVTIQHPWF…RTVLDSCISE (63 aa). A Deamidated glutamine; partial modification is found at Gln6. Ser45 bears the Phosphoserine mark. Residue Gln50 is modified to Deamidated glutamine; partial. The region spanning 76 to 185 is the sHSP domain; sequence HAGNPENNPI…GHSERAIPVS (110 aa). Lys93 and Lys122 each carry N6-acetyllysine. Residue His123 participates in Zn(2+) binding. At Asn124 the chain carries Deamidated asparagine; partial. Zn(2+)-binding residues include Glu125 and His130. Ser145 is subject to Phosphoserine. Gln170 carries the post-translational modification Deamidated glutamine; partial. The tract at residues 170-196 is disordered; it reads QSGLDAGHSERAIPVSQEEKPSSAPLF. The span at 176–190 shows a compositional bias: basic and acidic residues; it reads GHSERAIPVSQEEKP. Residue His177 coordinates Zn(2+). O-linked (GlcNAc) serine glycosylation is present at Ser185.

It belongs to the small heat shock protein (HSP20) family. As to quaternary structure, heteromer composed of three CRYAA and one CRYAB subunits. Inter-subunit bridging via zinc ions enhances stability, which is crucial as there is no protein turn over in the lens. Can also form homodimers and homotetramers (dimers of dimers) which serve as the building blocks of homooligomers. Within homooligomers, the zinc-binding motif is created from residues of 3 different molecules. His-123 and Glu-125 from one molecule are ligands of the zinc ion, and His-130 and His-177 residues from additional molecules complete the site with tetrahedral coordination geometry. Part of a complex required for lens intermediate filament formation composed of BFSP1, BFSP2 and CRYAA. In terms of processing, acetylation at Lys-93 may increase chaperone activity. Post-translationally, undergoes age-dependent proteolytical cleavage at the C-terminus.

The protein resides in the cytoplasm. It is found in the nucleus. In terms of biological role, contributes to the transparency and refractive index of the lens. Acts as a chaperone, preventing aggregation of various proteins under a wide range of stress conditions. Required for the correct formation of lens intermediate filaments as part of a complex composed of BFSP1, BFSP2 and CRYAA. The chain is Alpha-crystallin A chain (CRYAA) from Spalax ehrenbergi (Middle East blind mole rat).